An 86-amino-acid chain; its full sequence is Mu-theraphotoxin-Cg2a 1 (86 aa).

An N-terminal signal peptide occupies residues 1–21 (MKVSVVITLAVLGIMFVWASA). Residues 22-50 (AELEERGSDQRDSPAWLKSMERIFQSEER) constitute a propeptide that is removed on maturation. 3 disulfides stabilise this stretch: C52-C66, C59-C71, and C65-C78. Residue F84 is modified to Phenylalanine amide.

Belongs to the neurotoxin 10 (Hwtx-1) family. 37 (Jztx-31) subfamily. In terms of tissue distribution, expressed by the venom gland.

The protein localises to the secreted. Inhibits both peak current and fast inactivation of voltage-gated sodium channels (Nav) channels. Inhibits the inactivation of Nav on DRG neurons (EC(50)=1.77 uM) and peak current of cardiac myocytes (IC(50)=0.90 uM). The protein is Mu-theraphotoxin-Cg2a 1 of Chilobrachys guangxiensis (Chinese earth tiger tarantula).